A 486-amino-acid chain; its full sequence is Cardiolipin synthase A (486 aa).

A run of 2 helical transmembrane segments spans residues 3–23 (TFYT…IAGV) and 38–58 (MAWL…YLSF). PLD phosphodiesterase domains are found at residues 219-246 (MDLR…VDPR) and 399-426 (EGGL…DMRS). Catalysis depends on residues histidine 224, lysine 226, aspartate 231, histidine 404, lysine 406, and aspartate 411.

This sequence belongs to the phospholipase D family. Cardiolipin synthase subfamily. ClsA sub-subfamily.

It is found in the cell inner membrane. The catalysed reaction is 2 a 1,2-diacyl-sn-glycero-3-phospho-(1'-sn-glycerol) = a cardiolipin + glycerol. Its function is as follows. Catalyzes the reversible phosphatidyl group transfer from one phosphatidylglycerol molecule to another to form cardiolipin (CL) (diphosphatidylglycerol) and glycerol. In Klebsiella pneumoniae (strain 342), this protein is Cardiolipin synthase A.